A 459-amino-acid polypeptide reads, in one-letter code: ATP-binding protein Uup-like (459 aa).

The ABC transporter domain occupies 132–350 (FEMEDVSYEI…QQANFWASKA (219 aa)). 164–171 (GPNGCGKT) is a binding site for ATP. Residues 357 to 375 (AKKSEPLKEESAVKNDRTS) are compositionally biased toward basic and acidic residues. Residues 357–381 (AKKSEPLKEESAVKNDRTSKPKSVK) are disordered.

It belongs to the ABC transporter superfamily. ABCF family. Uup subfamily.

The protein resides in the cytoplasm. It carries out the reaction ATP + H2O = ADP + phosphate + H(+). In terms of biological role, might play a role in ribosome assembly or function; this is missing the first ABC transporter domain compared to paralogs. The protein is ATP-binding protein Uup-like (uup-B) of Haemophilus influenzae (strain ATCC 51907 / DSM 11121 / KW20 / Rd).